Consider the following 113-residue polypeptide: Small ribosomal subunit protein mS41 (113 aa).

A mitochondrion-targeting transit peptide spans 1–22 (MLILKRIFIIRNFIFPFSNCRY).

The protein belongs to the mitochondrion-specific ribosomal protein mS41 family. In terms of assembly, component of the mitochondrial small ribosomal subunit (mt-SSU). Mature yeast 74S mitochondrial ribosomes consist of a small (37S) and a large (54S) subunit. The 37S small subunit contains a 15S ribosomal RNA (15S mt-rRNA) and at least 32 different proteins. The 54S large subunit contains a 21S rRNA (21S mt-rRNA) and at least 45 different proteins.

The protein resides in the mitochondrion. Component of the mitochondrial ribosome (mitoribosome), a dedicated translation machinery responsible for the synthesis of mitochondrial genome-encoded proteins, including at least some of the essential transmembrane subunits of the mitochondrial respiratory chain. The mitoribosomes are attached to the mitochondrial inner membrane and translation products are cotranslationally integrated into the membrane. mS41 is involved in telomere length regulation. The sequence is that of Small ribosomal subunit protein mS41 (fyv4) from Schizosaccharomyces pombe (strain 972 / ATCC 24843) (Fission yeast).